Consider the following 45-residue polypeptide: METIYLLAKLPEAYQIFDPLVDVLPVIPLFFLALAFVWQAAVGFK.

Positions 1 to 8 (METIYLLA) are excised as a propeptide. The chain crosses the membrane as a helical span at residues 16–40 (IFDPLVDVLPVIPLFFLALAFVWQA).

Belongs to the PsbK family. PSII is composed of 1 copy each of membrane proteins PsbA, PsbB, PsbC, PsbD, PsbE, PsbF, PsbH, PsbI, PsbJ, PsbK, PsbL, PsbM, PsbT, PsbX, PsbY, PsbZ, Psb30/Ycf12, peripheral proteins PsbO, CyanoQ (PsbQ), PsbU, PsbV and a large number of cofactors. It forms dimeric complexes.

It localises to the cellular thylakoid membrane. Functionally, one of the components of the core complex of photosystem II (PSII). PSII is a light-driven water:plastoquinone oxidoreductase that uses light energy to abstract electrons from H(2)O, generating O(2) and a proton gradient subsequently used for ATP formation. It consists of a core antenna complex that captures photons, and an electron transfer chain that converts photonic excitation into a charge separation. The polypeptide is Photosystem II reaction center protein K (Synechocystis sp. (strain ATCC 27184 / PCC 6803 / Kazusa)).